The primary structure comprises 160 residues: Serine-protein kinase RsbW (160 aa).

This sequence belongs to the anti-sigma-factor family.

The enzyme catalyses L-seryl-[protein] + ATP = O-phospho-L-seryl-[protein] + ADP + H(+). It carries out the reaction L-threonyl-[protein] + ATP = O-phospho-L-threonyl-[protein] + ADP + H(+). In terms of biological role, negative regulator of sigma-B activity. Phosphorylates and inactivates its specific antagonist protein, RsbV. Upon phosphorylation of RsbV, RsbW is released and binds to sigma-B, thereby blocking its ability to form an RNA polymerase holoenzyme (E-sigma-B). This Bacillus thuringiensis (strain Al Hakam) protein is Serine-protein kinase RsbW.